The primary structure comprises 490 residues: Ketol-acid reductoisomerase (NADP(+)) (490 aa).

The KARI N-terminal Rossmann domain occupies 15–208 (INLQKCKLID…GSHHAGILHS (194 aa)). Residues 45 to 48 (CGSQ), R68, S78, and 108 to 110 (DKQ) each bind NADP(+). H132 is an active-site residue. Position 158 (G158) interacts with NADP(+). KARI C-terminal knotted domains are found at residues 209 to 344 (SFIA…KCNI) and 345 to 484 (YYKQ…MTSM). 4 residues coordinate Mg(2+): D217, E221, E389, and E393. S414 lines the substrate pocket.

This sequence belongs to the ketol-acid reductoisomerase family. It depends on Mg(2+) as a cofactor.

The enzyme catalyses (2R)-2,3-dihydroxy-3-methylbutanoate + NADP(+) = (2S)-2-acetolactate + NADPH + H(+). The catalysed reaction is (2R,3R)-2,3-dihydroxy-3-methylpentanoate + NADP(+) = (S)-2-ethyl-2-hydroxy-3-oxobutanoate + NADPH + H(+). It functions in the pathway amino-acid biosynthesis; L-isoleucine biosynthesis; L-isoleucine from 2-oxobutanoate: step 2/4. It participates in amino-acid biosynthesis; L-valine biosynthesis; L-valine from pyruvate: step 2/4. Its function is as follows. Involved in the biosynthesis of branched-chain amino acids (BCAA). Catalyzes an alkyl-migration followed by a ketol-acid reduction of (S)-2-acetolactate (S2AL) to yield (R)-2,3-dihydroxy-isovalerate. In the isomerase reaction, S2AL is rearranged via a Mg-dependent methyl migration to produce 3-hydroxy-3-methyl-2-ketobutyrate (HMKB). In the reductase reaction, this 2-ketoacid undergoes a metal-dependent reduction by NADPH to yield (R)-2,3-dihydroxy-isovalerate. This is Ketol-acid reductoisomerase (NADP(+)) from Buchnera aphidicola subsp. Melaphis rhois.